The chain runs to 104 residues: ATP-dependent Clp protease adapter protein ClpS (104 aa).

Residues 1 to 20 (MAEETPTRSPGGAAVLDKAP) form a disordered region.

The protein belongs to the ClpS family. In terms of assembly, binds to the N-terminal domain of the chaperone ClpA.

Functionally, involved in the modulation of the specificity of the ClpAP-mediated ATP-dependent protein degradation. The sequence is that of ATP-dependent Clp protease adapter protein ClpS from Synechococcus sp. (strain CC9902).